The following is a 970-amino-acid chain: MPVKKQEAHRALELLEDYHARLSEPQDRALRIAIERVIRIFKSRLFQALLDIQEFYELTLLDDSKSIQQKTAETLQIATKWEKDGQAVKIADFIKSSNLNRNCAYEFNNDASSNQTNQSALNQNPIANNVSAQAQAEALSRTFKSELEEILNQRMRIESDTENAKEPTVEQQQKQQQAQQRSSRSPQQQNPQQQQGSKSRSGSQTVNGDDSWLYEDIQLERGNSGLGFSIAGGTDNPHIGTDTSIYITKLISGGAAAADGRLSINDIIVSVNDVSVVDVPHASAVDALKKAGNVVKLHVKRKRGTATTPAAGSAAGDARDSAASGPKVIEIDLVKGGKGLGFSIAGGIGNQHIPGDNGIYVTKLMDGGAAQVDGRLSIGDKLIAVRTNGSEKNLENVTHELAVATLKSITDKVTLIIGKTQHLTTSASGGGGGGLSSGQQLSQSQSQLATSQSQSQVHQQQHATPMVNSQSTEPGSRYASTNVLAAVPPGTPRAVSTEDITREPRTITIQKGPQGLGFNIVGGEDGQGIYVSFILAGGPADLGSELKRGDQLLSVNNVNLTHATHEEAAQALKTSGGVVTLLAQYRPEEYNRFEARIQELKQQAALGAGGSGTLLRTTQKRSLYVRALFDYDPNRDDGLPSRGLPFKHGDILHVTNASDDEWWQARRVLGDNEDEQIGIVPSKRRWERKMRARDRSVKFQGHAAANNNLDKQSTLDRKKKNFTFSRKFPFMKSRDEKNEDGSDQEPFMLCYTQDDANAEGASEENVLSYEAVQRLSINYTRPVIILGPLKDRINDDLISEYPDKFGSCVPHTTRPKREYEVDGRDYHFVSSREQMERDIQNHLFIEAGQYNDNLYGTSVASVREVAEKGKHCILDVSGNAIKRLQVAQLYPVAVFIKPKSVDSVMEMNRRMTEEQAKKTYERAIKMEQEFGEYFTGVVQGDTIEEIYSKVKSMIWSQSGPTIWVPSKESL.

Residues 4–64 (KKQEAHRALE…FYELTLLDDS (61 aa)) form the L27 domain. The interval 161 to 209 (TENAKEPTVEQQQKQQQAQQRSSRSPQQQNPQQQQGSKSRSGSQTVNGD) is disordered. Over residues 171-204 (QQQKQQQAQQRSSRSPQQQNPQQQQGSKSRSGSQ) the composition is skewed to low complexity. 2 PDZ domains span residues 216–303 (DIQL…KRKR) and 330–421 (EIDL…GKTQ). Positions 424-477 (TTSASGGGGGGLSSGQQLSQSQSQLATSQSQSQVHQQQHATPMVNSQSTEPGSR) are disordered. Over residues 437–462 (SGQQLSQSQSQLATSQSQSQVHQQQH) the composition is skewed to low complexity. Positions 466–477 (MVNSQSTEPGSR) are enriched in polar residues. Position 496 is a phosphoserine (serine 496). Positions 506–587 (TITIQKGPQG…VVTLLAQYRP (82 aa)) constitute a PDZ 3 domain. In terms of domain architecture, SH3 spans 620–690 (KRSLYVRALF…PSKRRWERKM (71 aa)). Threonine 714 is subject to Phosphothreonine. The Guanylate kinase-like domain maps to 780–955 (TRPVIILGPL…IYSKVKSMIW (176 aa)).

The protein belongs to the MAGUK family. As to expression, during the cellular blastoderm stage, isoform B, isoform F, isoform H, isoform I and isoform L expression is localized to the cell borders. From stage 11 onwards, expression is found predominantly in the developing nervous system: axon bundles in the ventral cord and the brain. Stage 14 and 15 embryos exhibit expression in the developing body wall muscle. Expression in neuropil regions of the CNS and at NMJs persists through to larval development. Other isoforms show expression in embryonic epithelial cells. In larvae, expression is seen as a belt around salivary glands, imaginal disks and proventriculus. Expressed in adult reproductive tissues. In epithelia, coexpressed with scrib throughout development.

The protein resides in the cytoplasm. The protein localises to the cell membrane. It is found in the basolateral cell membrane. It localises to the cytoskeleton. Its subcellular location is the cell junction. The protein resides in the septate junction. In terms of biological role, during embryonic development, some isoforms are essential for proper neuronal differentiation and organization. Required for cell polarity; maintenance of apicobasal polarity. Plays a critical role at septate junctions in cellular growth control during larval development. The presence of a guanylate kinase domain suggests involvement in cellular adhesion as well as signal transduction to control cellular proliferation. In Drosophila melanogaster (Fruit fly), this protein is Disks large 1 tumor suppressor protein (dlg1).